The following is a 302-amino-acid chain: Probable alpha-L-glutamate ligase (302 aa).

One can recognise an ATP-grasp domain in the interval 104–287 (LQLLSRKGLG…IAGQIIEYIE (184 aa)). Residues Lys141, 178-179 (EY), Asp187, and 211-213 (RSN) contribute to the ATP site. Mg(2+) contacts are provided by Asp248, Glu260, and Asn262. Mn(2+)-binding residues include Asp248, Glu260, and Asn262.

Belongs to the RimK family. Requires Mg(2+) as cofactor. Mn(2+) serves as cofactor.

This Chromohalobacter salexigens (strain ATCC BAA-138 / DSM 3043 / CIP 106854 / NCIMB 13768 / 1H11) protein is Probable alpha-L-glutamate ligase.